The primary structure comprises 278 residues: 4-deoxy-L-threo-5-hexosulose-uronate ketol-isomerase (278 aa).

Zn(2+) is bound by residues histidine 196, histidine 198, glutamate 203, and histidine 245.

Belongs to the KduI family. Homohexamer. Zn(2+) serves as cofactor.

It carries out the reaction 5-dehydro-4-deoxy-D-glucuronate = 3-deoxy-D-glycero-2,5-hexodiulosonate. It functions in the pathway glycan metabolism; pectin degradation; 2-dehydro-3-deoxy-D-gluconate from pectin: step 4/5. Catalyzes the isomerization of 5-dehydro-4-deoxy-D-glucuronate to 3-deoxy-D-glycero-2,5-hexodiulosonate. The sequence is that of 4-deoxy-L-threo-5-hexosulose-uronate ketol-isomerase from Escherichia coli O127:H6 (strain E2348/69 / EPEC).